Here is a 636-residue protein sequence, read N- to C-terminus: ABC transporter ATP-binding protein RamA (636 aa).

5 helical membrane-spanning segments follow: residues 45-65 (VLVL…PLAL), 78-98 (AGWW…LDSA), 175-195 (LVDV…ALLL), 269-289 (GVLV…RLAA), and 297-317 (LLAV…ASLL). Positions 45-322 (VLVLLCSVAA…AASLLGAIVR (278 aa)) constitute an ABC transmembrane type-1 domain. An ABC transporter domain is found at 354 to 585 (LRLCGVRVLR…AGYREVFGAG (232 aa)). 386–393 (GRSGAGKS) lines the ATP pocket. Residues 589-606 (GAGAGAGAGADAGAGADA) are compositionally biased toward gly residues. The tract at residues 589-636 (GAGAGAGAGADAGAGADAGPGPDSGAATAVGGSGPGPVRRPEPEEARP) is disordered. Residues 607–618 (GPGPDSGAATAV) are compositionally biased toward low complexity. The segment covering 627–636 (RRPEPEEARP) has biased composition (basic and acidic residues).

It belongs to the ABC transporter superfamily.

The protein localises to the cell membrane. Its function is as follows. Probably involved in exporting SapB from the cell. Expression of the ram locus (ramA, ramB and ramR) induces rapid aerial mycelium formation in S.lividans. The chain is ABC transporter ATP-binding protein RamA from Streptomyces coelicolor (strain ATCC BAA-471 / A3(2) / M145).